A 741-amino-acid chain; its full sequence is Phosphoribosylformylglycinamidine synthase subunit PurL (741 aa).

His-54 is an active-site residue. Positions 57 and 98 each coordinate ATP. Position 100 (Glu-100) interacts with Mg(2+). Substrate is bound by residues 101–104 (SHNH) and Arg-123. The Proton acceptor role is filled by His-102. Asp-124 lines the Mg(2+) pocket. Gln-251 lines the substrate pocket. Asp-279 provides a ligand contact to Mg(2+). 323–325 (ESQ) lines the substrate pocket. 2 residues coordinate ATP: Asp-510 and Gly-547. Residue Asn-548 participates in Mg(2+) binding. Ser-550 serves as a coordination point for substrate.

This sequence belongs to the FGAMS family. As to quaternary structure, monomer. Part of the FGAM synthase complex composed of 1 PurL, 1 PurQ and 2 PurS subunits.

The protein localises to the cytoplasm. The enzyme catalyses N(2)-formyl-N(1)-(5-phospho-beta-D-ribosyl)glycinamide + L-glutamine + ATP + H2O = 2-formamido-N(1)-(5-O-phospho-beta-D-ribosyl)acetamidine + L-glutamate + ADP + phosphate + H(+). It functions in the pathway purine metabolism; IMP biosynthesis via de novo pathway; 5-amino-1-(5-phospho-D-ribosyl)imidazole from N(2)-formyl-N(1)-(5-phospho-D-ribosyl)glycinamide: step 1/2. Functionally, part of the phosphoribosylformylglycinamidine synthase complex involved in the purines biosynthetic pathway. Catalyzes the ATP-dependent conversion of formylglycinamide ribonucleotide (FGAR) and glutamine to yield formylglycinamidine ribonucleotide (FGAM) and glutamate. The FGAM synthase complex is composed of three subunits. PurQ produces an ammonia molecule by converting glutamine to glutamate. PurL transfers the ammonia molecule to FGAR to form FGAM in an ATP-dependent manner. PurS interacts with PurQ and PurL and is thought to assist in the transfer of the ammonia molecule from PurQ to PurL. This Picrophilus torridus (strain ATCC 700027 / DSM 9790 / JCM 10055 / NBRC 100828 / KAW 2/3) protein is Phosphoribosylformylglycinamidine synthase subunit PurL.